Reading from the N-terminus, the 440-residue chain is Nuclear hormone receptor family member nhr-130 (440 aa).

Positions L34–F110 form a DNA-binding region, nuclear receptor. 2 NR C4-type zinc fingers span residues C37–C57 and C74–C93. The 256-residue stretch at E184–T439 folds into the NR LBD domain.

Belongs to the nuclear hormone receptor family.

Its subcellular location is the nucleus. Functionally, orphan nuclear receptor. The protein is Nuclear hormone receptor family member nhr-130 (nhr-130) of Caenorhabditis elegans.